A 117-amino-acid chain; its full sequence is UPF0125 protein VV0820 (117 aa).

A disordered region spans residues 90–117; it reads RKRAEQAKESGAADPVTGGKPSPLRKAD.

This sequence belongs to the UPF0125 (RnfH) family.

The sequence is that of UPF0125 protein VV0820 from Vibrio vulnificus (strain YJ016).